The primary structure comprises 156 residues: MKALLIAAGVAALSSTAMAAKLDEKVPYPKADAGFTRQVIHLPKQDAEDAFKVEIIAGKTLEADCNQQRLGGELEEHTLEGWGYSYYRLDKVSGPMSTMMACPGQKKEQRFIPVVGEGFLLCYNSKLPIVVYAPKDVEVRYRIWSASEKVEKAVSE.

Residues 1 to 19 (MKALLIAAGVAALSSTAMA) form the signal peptide. The cysteines at positions 65 and 102 are disulfide-linked.

It belongs to the protease inhibitor I11 (ecotin) family. In terms of assembly, homodimer.

Its subcellular location is the periplasm. Functionally, general inhibitor of family S1 serine proteases. The sequence is that of Ecotin from Pseudomonas aeruginosa (strain ATCC 15692 / DSM 22644 / CIP 104116 / JCM 14847 / LMG 12228 / 1C / PRS 101 / PAO1).